We begin with the raw amino-acid sequence, 860 residues long: M-phase phosphoprotein 8 (860 aa).

M1 bears the N-acetylmethionine mark. S51, S85, S136, and S138 each carry phosphoserine. In terms of domain architecture, Chromo spans 59-118 (FEVEKILDMKTEGGKVLYKVRWKGYTSDDDTWEPEIHLEDCKEVLLEFRKKIAENKAKAV). Residues 80–87 (WKGYTSDD) are histone H3K9me3 binding. Positions 129–141 (NDIFEANSDSDQQ) are enriched in polar residues. The tract at residues 129 to 191 (NDIFEANSDS…SKPDLESSLE (63 aa)) is disordered. T144 bears the Phosphothreonine mark. A phosphoserine; by CDK1 mark is found at S149 and S164. Composition is skewed to basic and acidic residues over residues 159–169 (QREEKSPDDLK) and 177–186 (KLKDKSKPDL). Residues S188, S189, and S192 each carry the phosphoserine modification. A compositionally biased stretch (basic and acidic residues) spans 206 to 249 (AKEELKESKKPKKDEVKETKELKKVKKGEIRDLKTKTREDPKEN). Positions 206-440 (AKEELKESKK…GRKEPKGLKT (235 aa)) are disordered. Low complexity predominate over residues 259–268 (ESQVESESSV). Phosphoserine occurs at positions 266, 272, and 279. Over residues 280-314 (EGLHSDSREEKQNTKSARERAGQDMGLEHGFEKPL) the composition is skewed to basic and acidic residues. A Phosphoserine modification is found at S319. The residue at position 334 (T334) is a Phosphothreonine; by CDK1. The segment covering 336–377 (RKAEDTRENRKLENKNAFLEKKTVPKKQRNQDRSKSAAELEK) has biased composition (basic and acidic residues). T385 is subject to Phosphothreonine; by CDK1. Residues S392, S400, and S403 each carry the phosphoserine modification. A compositionally biased stretch (basic and acidic residues) spans 408-440 (KETKRNESKEKYQKRHDSDKEEKGRKEPKGLKT). The interaction with humanin stretch occupies residues 431-560 (GRKEPKGLKT…HLDGKDENFA (130 aa)). Residue T454 is modified to Phosphothreonine. Residues 458 to 496 (KNDVSENNRKREEIPLDFKTIDDHKTKENKQSLKERRNT) form a disordered region. 4 ANK repeats span residues 600 to 629 (SGMT…KVNG), 633 to 662 (NGTT…FVNV), 666 to 695 (NGET…DCNI), and 699 to 728 (HQNS…TLSR).

In terms of assembly, homodimer. Interacts (via chromo domain) with histone H3K9me3. Has the highest affinity for H3K9me3, and lesser affinity for H3K9me2 and H3K9me1. Component of the HUSH complex; at least composed of TASOR, PPHLN1 and MPHOSPH8. Interacts with DNMT3, EHMT1 and SETDB1. Interacts with MORC2; the interaction associateS MORC2 with the HUSH complex which recruits MORC2 to heterochromatic loci. Interacts with ZNF638; leading to recruitment of the HUSH complex to unintegrated retroviral DNA. Interacts with TASOR. Interacts with humanin. In terms of processing, phosphorylated in M (mitotic) phase. Phosphorylation by CDK1 promotes dissociation from chromatin.

It is found in the nucleus. The protein localises to the chromosome. Its function is as follows. Heterochromatin component that specifically recognizes and binds methylated 'Lys-9' of histone H3 (H3K9me) and promotes recruitment of proteins that mediate epigenetic repression. Mediates recruitment of the HUSH complex to H3K9me3 sites: the HUSH complex is recruited to genomic loci rich in H3K9me3 and is required to maintain transcriptional silencing by promoting recruitment of SETDB1, a histone methyltransferase that mediates further deposition of H3K9me3, as well as MORC2. Binds H3K9me and promotes DNA methylation by recruiting DNMT3A to target CpG sites; these can be situated within the coding region of the gene. Mediates down-regulation of CDH1 expression. Also represses L1 retrotransposons in collaboration with MORC2 and, probably, SETDB1, the silencing is dependent of repressive epigenetic modifications, such as H3K9me3 mark. Silencing events often occur within introns of transcriptionally active genes, and lead to the down-regulation of host gene expression. The HUSH complex is also involved in the silencing of unintegrated retroviral DNA by being recruited by ZNF638: some part of the retroviral DNA formed immediately after infection remains unintegrated in the host genome and is transcriptionally repressed. The chain is M-phase phosphoprotein 8 from Homo sapiens (Human).